Here is a 226-residue protein sequence, read N- to C-terminus: Putative type II restriction enzyme MjaVIP (226 aa).

This sequence belongs to the BsaWI type II restriction endonuclease family.

It catalyses the reaction Endonucleolytic cleavage of DNA to give specific double-stranded fragments with terminal 5'-phosphates.. Its function is as follows. A P subtype restriction enzyme that recognizes the double-stranded sequence 5'-CCGG-3'; the cleavage site is unknown. The sequence is that of Putative type II restriction enzyme MjaVIP (mjaVIRP) from Methanocaldococcus jannaschii (strain ATCC 43067 / DSM 2661 / JAL-1 / JCM 10045 / NBRC 100440) (Methanococcus jannaschii).